A 529-amino-acid chain; its full sequence is Peptide chain release factor 3 (529 aa).

The region spanning 7-275 is the tr-type G domain; that stretch reads EQRRTFGIIS…AVVELAPSPR (269 aa). Residues 16 to 23, 84 to 88, and 138 to 141 each bind GTP; these read SHPDAGKT, DTPGH, and NKLD.

The protein belongs to the TRAFAC class translation factor GTPase superfamily. Classic translation factor GTPase family. PrfC subfamily.

The protein resides in the cytoplasm. In terms of biological role, increases the formation of ribosomal termination complexes and stimulates activities of RF-1 and RF-2. It binds guanine nucleotides and has strong preference for UGA stop codons. It may interact directly with the ribosome. The stimulation of RF-1 and RF-2 is significantly reduced by GTP and GDP, but not by GMP. This is Peptide chain release factor 3 from Syntrophus aciditrophicus (strain SB).